We begin with the raw amino-acid sequence, 193 residues long: Xanthine phosphoribosyltransferase (193 aa).

2 residues coordinate xanthine: Leu20 and Thr27. 128–132 (ANGQA) is a 5-phospho-alpha-D-ribose 1-diphosphate binding site. Lys156 contacts xanthine.

This sequence belongs to the purine/pyrimidine phosphoribosyltransferase family. Xpt subfamily. Homodimer.

Its subcellular location is the cytoplasm. The catalysed reaction is XMP + diphosphate = xanthine + 5-phospho-alpha-D-ribose 1-diphosphate. Its pathway is purine metabolism; XMP biosynthesis via salvage pathway; XMP from xanthine: step 1/1. Functionally, converts the preformed base xanthine, a product of nucleic acid breakdown, to xanthosine 5'-monophosphate (XMP), so it can be reused for RNA or DNA synthesis. This Streptococcus pyogenes serotype M5 (strain Manfredo) protein is Xanthine phosphoribosyltransferase.